A 168-amino-acid chain; its full sequence is MSLVILGVDPGSRITGFGVVRVANGKIEHINHGVIVMDGDDAFPRRMTELGSAFREVMEKYKPEQVVIEKIFLGKNADSAFKLGHARGVIMYEAGLGGAEVQEYATRSVKKGVTGNGGASKEDVQAILKVMLSLKTISRIDASDALAMACYHAFEMKKKALMQRAVSL.

Residues Asp-9, Glu-69, and Asp-141 contribute to the active site. Mg(2+)-binding residues include Asp-9, Glu-69, and Asp-141.

The protein belongs to the RuvC family. In terms of assembly, homodimer which binds Holliday junction (HJ) DNA. The HJ becomes 2-fold symmetrical on binding to RuvC with unstacked arms; it has a different conformation from HJ DNA in complex with RuvA. In the full resolvosome a probable DNA-RuvA(4)-RuvB(12)-RuvC(2) complex forms which resolves the HJ. Mg(2+) serves as cofactor.

It localises to the cytoplasm. The enzyme catalyses Endonucleolytic cleavage at a junction such as a reciprocal single-stranded crossover between two homologous DNA duplexes (Holliday junction).. Its function is as follows. The RuvA-RuvB-RuvC complex processes Holliday junction (HJ) DNA during genetic recombination and DNA repair. Endonuclease that resolves HJ intermediates. Cleaves cruciform DNA by making single-stranded nicks across the HJ at symmetrical positions within the homologous arms, yielding a 5'-phosphate and a 3'-hydroxyl group; requires a central core of homology in the junction. The consensus cleavage sequence is 5'-(A/T)TT(C/G)-3'. Cleavage occurs on the 3'-side of the TT dinucleotide at the point of strand exchange. HJ branch migration catalyzed by RuvA-RuvB allows RuvC to scan DNA until it finds its consensus sequence, where it cleaves and resolves the cruciform DNA. The chain is Crossover junction endodeoxyribonuclease RuvC from Bdellovibrio bacteriovorus (strain ATCC 15356 / DSM 50701 / NCIMB 9529 / HD100).